The chain runs to 371 residues: 4-hydroxy-3-methylbut-2-en-1-yl diphosphate synthase (flavodoxin) (371 aa).

[4Fe-4S] cluster is bound by residues cysteine 272, cysteine 275, cysteine 307, and glutamate 314.

It belongs to the IspG family. The cofactor is [4Fe-4S] cluster.

It carries out the reaction (2E)-4-hydroxy-3-methylbut-2-enyl diphosphate + oxidized [flavodoxin] + H2O + 2 H(+) = 2-C-methyl-D-erythritol 2,4-cyclic diphosphate + reduced [flavodoxin]. It participates in isoprenoid biosynthesis; isopentenyl diphosphate biosynthesis via DXP pathway; isopentenyl diphosphate from 1-deoxy-D-xylulose 5-phosphate: step 5/6. In terms of biological role, converts 2C-methyl-D-erythritol 2,4-cyclodiphosphate (ME-2,4cPP) into 1-hydroxy-2-methyl-2-(E)-butenyl 4-diphosphate. This Pseudomonas aeruginosa (strain LESB58) protein is 4-hydroxy-3-methylbut-2-en-1-yl diphosphate synthase (flavodoxin).